The following is a 258-amino-acid chain: UPF0246 protein YaaA (258 aa).

This sequence belongs to the UPF0246 family.

This Escherichia coli O157:H7 (strain EC4115 / EHEC) protein is UPF0246 protein YaaA.